We begin with the raw amino-acid sequence, 106 residues long: NADH dehydrogenase [ubiquinone] iron-sulfur protein 5 (106 aa).

The CHCH domain maps to A30 to R74. Short sequence motifs (cx9C motif) lie at residues C33–C43 and C56–C66. 2 disulfide bridges follow: C33/C66 and C43/C56. A disordered region spans residues I87–P106.

It belongs to the complex I NDUFS5 subunit family. As to quaternary structure, mammalian complex I is composed of 45 different subunits. This is a component of the iron-sulfur (IP) fragment of the enzyme.

The protein localises to the mitochondrion inner membrane. It is found in the mitochondrion intermembrane space. Functionally, accessory subunit of the mitochondrial membrane respiratory chain NADH dehydrogenase (Complex I), that is believed not to be involved in catalysis. Complex I functions in the transfer of electrons from NADH to the respiratory chain. The immediate electron acceptor for the enzyme is believed to be ubiquinone. This is NADH dehydrogenase [ubiquinone] iron-sulfur protein 5 (NDUFS5) from Macaca fascicularis (Crab-eating macaque).